The following is a 428-amino-acid chain: Putative oxidoreductase YteT (428 aa).

A signal peptide spans Met1–Glu23.

It belongs to the Gfo/Idh/MocA family.

Functionally, may play a role in the degradation of type I rhamnogalacturonan derived from plant cell walls. In Bacillus subtilis (strain 168), this protein is Putative oxidoreductase YteT (yteT).